Consider the following 217-residue polypeptide: GTP cyclohydrolase 1 (217 aa).

Cys-109, His-112, and Cys-180 together coordinate Zn(2+).

Belongs to the GTP cyclohydrolase I family. As to quaternary structure, toroid-shaped homodecamer, composed of two pentamers of five dimers.

The enzyme catalyses GTP + H2O = 7,8-dihydroneopterin 3'-triphosphate + formate + H(+). Its pathway is cofactor biosynthesis; 7,8-dihydroneopterin triphosphate biosynthesis; 7,8-dihydroneopterin triphosphate from GTP: step 1/1. This chain is GTP cyclohydrolase 1, found in Vibrio campbellii (strain ATCC BAA-1116).